The following is a 1031-amino-acid chain: Translation initiation factor IF-2 (1031 aa).

2 disordered regions span residues 33–369 and 388–436; these read KSHS…GDVL and LKPL…AESL. Positions 45 to 56 are enriched in basic and acidic residues; it reads ELVRSKLSEPRV. The span at 96–105 shows a compositional bias: low complexity; it reads PAPAQQQAAA. A compositionally biased stretch (polar residues) spans 108-123; that stretch reads ASSSKPSPQRPDQLSS. Residues 148–171 show a composition bias toward low complexity; it reads PAAQEPQPAAASTRPEAAAKAGSP. A compositionally biased stretch (pro residues) spans 184–200; sequence VLPPPRRAASGPEPPQR. The span at 250 to 281 shows a compositional bias: basic and acidic residues; the sequence is TRPEPRSPVAKKEESSDSGKADEAPRPQRRLE. Over residues 286-299 the composition is skewed to pro residues; it reads PTRPVAKPLPPEPD. Positions 419 to 435 are enriched in low complexity; the sequence is RPSASAEATAPEAAAES. The 174-residue stretch at 522 to 695 folds into the tr-type G domain; sequence PRPPVVTIMG…LLVADVAELQ (174 aa). The segment at 531-538 is G1; the sequence is GHVDHGKT. 531 to 538 is a GTP binding site; it reads GHVDHGKT. The G2 stretch occupies residues 556 to 560; the sequence is GITQR. The tract at residues 581–584 is G3; it reads DTPG. GTP contacts are provided by residues 581 to 585 and 635 to 638; these read DTPGH and NKID. The segment at 635-638 is G4; it reads NKID. The interval 671 to 673 is G5; that stretch reads SAL.

This sequence belongs to the TRAFAC class translation factor GTPase superfamily. Classic translation factor GTPase family. IF-2 subfamily.

It localises to the cytoplasm. In terms of biological role, one of the essential components for the initiation of protein synthesis. Protects formylmethionyl-tRNA from spontaneous hydrolysis and promotes its binding to the 30S ribosomal subunits. Also involved in the hydrolysis of GTP during the formation of the 70S ribosomal complex. This chain is Translation initiation factor IF-2, found in Synechococcus sp. (strain JA-3-3Ab) (Cyanobacteria bacterium Yellowstone A-Prime).